Reading from the N-terminus, the 228-residue chain is Phosphatidate cytidylyltransferase (228 aa).

Helical transmembrane passes span 31-51, 65-85, 93-113, 131-151, 165-185, and 206-226; these read FVVAILWFKTLFYILMILVGL, IHYLLIGFIIIPIPISLLIFL, LVIMLYFCIIWSVDTFAMIGG, WTGLIIGTISAGLIAVLVSLI, IYLFIISCILALIAQSSDLFI, and GVLDRFDSIILTAPVFFGINI.

This sequence belongs to the CDS family.

It localises to the cell membrane. The enzyme catalyses a 1,2-diacyl-sn-glycero-3-phosphate + CTP + H(+) = a CDP-1,2-diacyl-sn-glycerol + diphosphate. It participates in phospholipid metabolism; CDP-diacylglycerol biosynthesis; CDP-diacylglycerol from sn-glycerol 3-phosphate: step 3/3. The sequence is that of Phosphatidate cytidylyltransferase (cdsA) from Rickettsia typhi (strain ATCC VR-144 / Wilmington).